The primary structure comprises 431 residues: MPFITSVYAREVLDSRGNPTVEVEIVTDSGAFGRTLVPSGASTGEHEAVELRDGDKSRYLGKGVLKAVENVNDIIGPAILGDSVLDQVALDRKLIALDGTKNKGKLGANAILGVSIAAAKAAADLLNLELYQYLGGFNAKQLPVPMMNIINGGAHSDAPIDFQEFMIFPVGAPSFKEAIRWGAEIFHALKAILKKKGLSTAVGDEGGFAPNLASNEDTIDNILEAIKNAGYKAGEEVFIGFDVAASEFFDKAKGKYVFKKSTKEEFTSAELVEYYAGLVQKYPIISIEDGMDENDWDGWKLLTDKLGSKIQLVGDDLFVTNTEYLARGIKTNTANSILVKVNQIGTLTETFDAIEMAKRAGYTAVISHRSGETEDTTIADIAVAANTGQIKTGSASRTDRVAKYNQLMRIEDQLGEDAVYLGKDSFYNLKK.

Q163 contributes to the (2R)-2-phosphoglycerate binding site. The Proton donor role is filled by E205. D242, E288, and D315 together coordinate Mg(2+). The (2R)-2-phosphoglycerate site is built by K340, R369, S370, and K391. K340 acts as the Proton acceptor in catalysis.

The protein belongs to the enolase family. The cofactor is Mg(2+).

It is found in the cytoplasm. The protein localises to the secreted. Its subcellular location is the cell surface. It catalyses the reaction (2R)-2-phosphoglycerate = phosphoenolpyruvate + H2O. The protein operates within carbohydrate degradation; glycolysis; pyruvate from D-glyceraldehyde 3-phosphate: step 4/5. Its function is as follows. Catalyzes the reversible conversion of 2-phosphoglycerate (2-PG) into phosphoenolpyruvate (PEP). It is essential for the degradation of carbohydrates via glycolysis. This chain is Enolase, found in Acholeplasma laidlawii (strain PG-8A).